The chain runs to 279 residues: Large ribosomal subunit protein uL2 (279 aa).

Disordered regions lie at residues 29–59 (PEKS…GGHK) and 224–279 (VAMN…KNKR). Residues 50-59 (TTRHKGGGHK) show a composition bias toward basic residues. Positions 253–268 (PEGRTRRPNKESDKLI) are enriched in basic and acidic residues. Positions 269–279 (VRRRRTGKNKR) are enriched in basic residues.

Belongs to the universal ribosomal protein uL2 family. In terms of assembly, part of the 50S ribosomal subunit. Forms a bridge to the 30S subunit in the 70S ribosome.

In terms of biological role, one of the primary rRNA binding proteins. Required for association of the 30S and 50S subunits to form the 70S ribosome, for tRNA binding and peptide bond formation. It has been suggested to have peptidyltransferase activity; this is somewhat controversial. Makes several contacts with the 16S rRNA in the 70S ribosome. This chain is Large ribosomal subunit protein uL2, found in Paenarthrobacter aurescens (strain TC1).